Consider the following 248-residue polypeptide: Triosephosphate isomerase (248 aa).

9–11 (NWK) is a binding site for substrate. Residue His-94 is the Electrophile of the active site. Glu-166 serves as the catalytic Proton acceptor. Substrate contacts are provided by residues Gly-172, Ser-212, and 233–234 (GG).

It belongs to the triosephosphate isomerase family. Homodimer.

It is found in the cytoplasm. It catalyses the reaction D-glyceraldehyde 3-phosphate = dihydroxyacetone phosphate. It functions in the pathway carbohydrate biosynthesis; gluconeogenesis. The protein operates within carbohydrate degradation; glycolysis; D-glyceraldehyde 3-phosphate from glycerone phosphate: step 1/1. Its function is as follows. Involved in the gluconeogenesis. Catalyzes stereospecifically the conversion of dihydroxyacetone phosphate (DHAP) to D-glyceraldehyde-3-phosphate (G3P). This chain is Triosephosphate isomerase, found in Clostridium perfringens (strain ATCC 13124 / DSM 756 / JCM 1290 / NCIMB 6125 / NCTC 8237 / Type A).